The sequence spans 221 residues: Thiopurine S-methyltransferase (221 aa).

S-adenosyl-L-methionine is bound by residues W12, L47, E68, and R125.

Belongs to the class I-like SAM-binding methyltransferase superfamily. TPMT family.

It is found in the cytoplasm. The enzyme catalyses S-adenosyl-L-methionine + a thiopurine = S-adenosyl-L-homocysteine + a thiopurine S-methylether.. This chain is Thiopurine S-methyltransferase, found in Legionella pneumophila (strain Corby).